The chain runs to 367 residues: MDAQSSAKVNSRKRRKEAPGPNGATEEDGIPSKVQRCAVGLRQPAPFSDEIEVDFSKPYVRVTMEEACRGTPCERPVRVYADGIFDLFHSGHARALMQAKNLFPNTYLIVGVCSDELTHNFKGFTVMNENERYDAVQHCRYVDEVVRNAPWTLTPEFLAEHRIDFVAHDDIPYSSAGSDDVYKHIKDAGMFAPTQRTEGISTSDIITRIVRDYDVYARRNLQRGYTAKELNVSFINEKKYHLQERVDKVKKKVKDVEEKSKEFVQKVEEKSIDLIQKWEEKSREFIGSFLEMFGPEGALKHMLKEGKGRMLQAISPKQSPSSSPTHERSPSPSFRWPFSGKTSPSSSPASLSRCRAVTCDISEDEED.

Met-1 carries the N-acetylmethionine modification. The disordered stretch occupies residues 1 to 32 (MDAQSSAKVNSRKRRKEAPGPNGATEEDGIPS). Lys-8 is subject to N6-acetyllysine. Ile-84, Phe-85, His-92, and Lys-122 together coordinate CTP. 2 residues coordinate phosphocholine: Lys-122 and Trp-151. His-168, Asp-169, Tyr-173, Gln-195, Arg-196, Thr-197, and Ile-200 together coordinate CTP. Amphipathic stretches follow at residues 228–287 (KELN…EFIG) and 298–315 (ALKHMLKEGKGRMLQAIS). A Phosphoserine modification is found at Ser-233. Positions 272-293 (IDLIQKWEEKSREFIGSFLEMF) are autoinhibitory (AI). The interval 313 to 367 (AISPKQSPSSSPTHERSPSPSFRWPFSGKTSPSSSPASLSRCRAVTCDISEDEED) is disordered. Phosphoserine is present on residues Ser-315, Ser-319, Ser-321, Ser-322, and Ser-323. Over residues 315-324 (SPKQSPSSSP) the composition is skewed to polar residues. Repeat unit 1 spans residues 319 to 324 (SPSSSP). A 3 X repeats region spans residues 319–348 (SPSSSPTHERSPSPSFRWPFSGKTSPSSSP). At Thr-325 the chain carries Phosphothreonine. Ser-329, Ser-331, and Ser-333 each carry phosphoserine. The stretch at 329 to 333 (SPSPS) is one 2; approximate repeat. Low complexity predominate over residues 330-352 (PSPSFRWPFSGKTSPSSSPASLS). Thr-342 bears the Phosphothreonine mark. Ser-343, Ser-345, Ser-346, Ser-347, Ser-350, and Ser-352 each carry phosphoserine. The stretch at 343–348 (SPSSSP) is repeat 3. Phosphothreonine is present on Thr-358. The residue at position 362 (Ser-362) is a Phosphoserine.

The protein belongs to the cytidylyltransferase family. As to quaternary structure, homodimer. In terms of processing, the serine residues of the C-terminus are phosphorylated. The inactive soluble form is stabilized by phosphorylation, the active membrane bound form is promoted by anionic lipids or diacylglycerol, and is stabilized by dephosphorylation. Monoubiquitinated by the SCF(FBXL2) complex, leading to proteasomal degradation. In terms of tissue distribution, brain and liver (at protein level). Also found in heart, kidney, spleen, lung, skeletal muscle, ovary and testis.

It is found in the cytoplasm. Its subcellular location is the cytosol. The protein resides in the membrane. It localises to the endoplasmic reticulum membrane. The protein localises to the nucleus. It catalyses the reaction phosphocholine + CTP + H(+) = CDP-choline + diphosphate. The protein operates within phospholipid metabolism; phosphatidylcholine biosynthesis; phosphatidylcholine from phosphocholine: step 1/2. Its activity is regulated as follows. Interconverts between an inactive cytosolic form and an active membrane-bound form. Activation involves disruption of an inhibitory interaction between helices at the base of the active site and the autoinhibitory (AI) region. Its function is as follows. Catalyzes the key rate-limiting step in the CDP-choline pathway for phosphatidylcholine biosynthesis. This is Choline-phosphate cytidylyltransferase A (Pcyt1a) from Mus musculus (Mouse).